We begin with the raw amino-acid sequence, 432 residues long: MEKLTLSPISRIDGEINLPGSKSLSNRALLLAALAKGTTQVTNLLDSDDIRYMLNALKALGVNYQLSDDKTVCVVEGIGGAFQWQNGLSLFLGNAGTAMRPLAAALCLKGDTESEVILTGEPRMKERPIKHLVDALRQTGANIQYLENDGYPPLAIRNQGIFGGKVQIDGSISSQFLTALLMAAPLGEGDMEIEILGELVSKPYIDITLAMMKDFGINVEHYNYQRFLIKGKQYYISPQTYLVEGDASSASYFLAAAAIKGKVKVTGIGRNSIQGDRLFADVLAQMGAKVTWGEDFIQVEKSELKGIDMDMNHIPDAAMTIAITALFAQGETVIRNIYNWRVKETDRLTAIATELRKLGAEVEEGEDFIRIQPLALDKFKHAEIATYNDHRIAMCFSLIALSDTSVTILDPACTAKTFPTYFSEFEKISKNQ.

3 residues coordinate 3-phosphoshikimate: Lys-22, Ser-23, and Arg-27. Residue Lys-22 participates in phosphoenolpyruvate binding. Phosphoenolpyruvate contacts are provided by Gly-96 and Arg-127. Ser-173, Ser-174, Gln-175, Ser-201, Asp-316, Asn-339, and Lys-343 together coordinate 3-phosphoshikimate. Residue Gln-175 coordinates phosphoenolpyruvate. Residue Asp-316 is the Proton acceptor of the active site. Phosphoenolpyruvate-binding residues include Arg-347, Arg-391, and Lys-416.

The protein belongs to the EPSP synthase family. As to quaternary structure, monomer.

It is found in the cytoplasm. The catalysed reaction is 3-phosphoshikimate + phosphoenolpyruvate = 5-O-(1-carboxyvinyl)-3-phosphoshikimate + phosphate. The protein operates within metabolic intermediate biosynthesis; chorismate biosynthesis; chorismate from D-erythrose 4-phosphate and phosphoenolpyruvate: step 6/7. In terms of biological role, catalyzes the transfer of the enolpyruvyl moiety of phosphoenolpyruvate (PEP) to the 5-hydroxyl of shikimate-3-phosphate (S3P) to produce enolpyruvyl shikimate-3-phosphate and inorganic phosphate. The sequence is that of 3-phosphoshikimate 1-carboxyvinyltransferase from Histophilus somni (strain 2336) (Haemophilus somnus).